Reading from the N-terminus, the 710-residue chain is Dual specificity protein kinase shkE (710 aa).

Composition is skewed to low complexity over residues 83-94 (DVSDSNNNNSTS), 107-129 (NNNN…NNNN), and 197-208 (QKQQQSQASIQQ). Disordered stretches follow at residues 83–136 (DVSD…PTVI) and 189–232 (QHLT…IPPE). Residues 237-495 (DVKTDLLGGG…EVTQRMNEVL (259 aa)) enclose the Protein kinase domain. ATP-binding positions include 243–251 (LGGGAYGKV) and Lys264. The active-site Proton acceptor is the Asp359. An SH2 domain is found at 597–707 (WFHFDISRDI…CPITEIKVPY (111 aa)).

This sequence belongs to the protein kinase superfamily. Ser/Thr protein kinase family. SH2 domain-containing protein kinase subfamily.

Its subcellular location is the membrane. The enzyme catalyses L-seryl-[protein] + ATP = O-phospho-L-seryl-[protein] + ADP + H(+). It catalyses the reaction L-threonyl-[protein] + ATP = O-phospho-L-threonyl-[protein] + ADP + H(+). Functionally, required for proper chemotaxis and phagocytosis; proper spatiotemporal control of F-actin levels in chemotaxing cells. Negative regulator of the PI3K (phosphatidylinositol 3 kinase) pathway. Predominantly phosphorylates serines and threonines and tyrosines at a lower level. In Dictyostelium discoideum (Social amoeba), this protein is Dual specificity protein kinase shkE (shkE).